The primary structure comprises 630 residues: Chaperone protein HtpG (630 aa).

Residues 1 to 343 (MAKHQFQTEA…SKDLPLNVSR (343 aa)) are a; substrate-binding. The b stretch occupies residues 344–554 (EILQSNAVMA…KEDPAFMMAQ (211 aa)). A c region spans residues 555–630 (IMKQMGQSGD…RLNRVIAKAI (76 aa)).

The protein belongs to the heat shock protein 90 family. As to quaternary structure, homodimer.

Its subcellular location is the cytoplasm. In terms of biological role, molecular chaperone. Has ATPase activity. The chain is Chaperone protein HtpG from Sulfurimonas denitrificans (strain ATCC 33889 / DSM 1251) (Thiomicrospira denitrificans (strain ATCC 33889 / DSM 1251)).